The following is a 267-amino-acid chain: Phosphatidylglycerol--prolipoprotein diacylglyceryl transferase (267 aa).

The next 4 helical transmembrane spans lie at 20 to 40, 57 to 77, 88 to 108, and 117 to 137; these read LEIRWYAICILLGLILGVYLA, FILIAFPLSILGARIYYVAFS, IFAIWNGGIAIYGGLITGAIV, and FINTLDFLDIVAPSVMIAQAI. A 1,2-diacyl-sn-glycero-3-phospho-(1'-sn-glycerol) is bound at residue arginine 139. The next 3 helical transmembrane spans lie at 175–195, 205–225, and 235–255; these read QPTFLFESLWNLLGFGLVCVL, GEITAFYLVWYGCGRLLIEGL, and IRVSQWLSGVLILVGIIMVVL.

The protein belongs to the Lgt family.

It is found in the cell membrane. It catalyses the reaction L-cysteinyl-[prolipoprotein] + a 1,2-diacyl-sn-glycero-3-phospho-(1'-sn-glycerol) = an S-1,2-diacyl-sn-glyceryl-L-cysteinyl-[prolipoprotein] + sn-glycerol 1-phosphate + H(+). It functions in the pathway protein modification; lipoprotein biosynthesis (diacylglyceryl transfer). Catalyzes the transfer of the diacylglyceryl group from phosphatidylglycerol to the sulfhydryl group of the N-terminal cysteine of a prolipoprotein, the first step in the formation of mature lipoproteins. The protein is Phosphatidylglycerol--prolipoprotein diacylglyceryl transferase of Streptococcus suis (strain 98HAH33).